Here is a 132-residue protein sequence, read N- to C-terminus: Large ribosomal subunit protein bL17 (132 aa).

The protein belongs to the bacterial ribosomal protein bL17 family. Part of the 50S ribosomal subunit. Contacts protein L32.

The polypeptide is Large ribosomal subunit protein bL17 (Saccharophagus degradans (strain 2-40 / ATCC 43961 / DSM 17024)).